A 155-amino-acid polypeptide reads, in one-letter code: uncharacterized protein (155 aa).

The N-terminal stretch at 1 to 30 (MTYNTNTSLSSYAGLSAFALSVFCILWGTA) is a signal peptide.

This is an uncharacterized protein from Treponema pallidum (strain Nichols).